Consider the following 343-residue polypeptide: Homeobox-leucine zipper protein HOX16 (343 aa).

The homeobox DNA-binding region spans 74-133 (LPEKKRRLTPEQVHLLERSFEEENKLEPERKTELARKLGLQPRQVAVWFQNRRARWKTKQ). A leucine-zipper region spans residues 132–176 (KQLERDFDRLKASFDALRADHDALLQDNHRLHSQVMSLTEKLQEK). The tract at residues 218 to 239 (FEEQQEQQVKAEDRLSTGSGGS) is disordered.

This sequence belongs to the HD-ZIP homeobox family. Class I subfamily. In terms of tissue distribution, expressed in seedlings, stems, leaf sheaths and blades and panicles.

The protein resides in the nucleus. Its function is as follows. Probable transcription factor. The chain is Homeobox-leucine zipper protein HOX16 (HOX16) from Oryza sativa subsp. japonica (Rice).